A 439-amino-acid polypeptide reads, in one-letter code: GTPase Der (439 aa).

EngA-type G domains follow at residues 4-169 and 177-352; these read AMVS…PQEE and IKIA…EEYN. GTP is bound by residues 10–17, 57–61, 120–123, 183–190, 230–234, and 295–298; these read GRPNVGKS, DTGGL, NKVD, GKPNVGKS, DTAGI, and NKWD. The KH-like domain maps to 353-437; the sequence is KRITTGLLNN…PIVISTKKRG (85 aa).

It belongs to the TRAFAC class TrmE-Era-EngA-EngB-Septin-like GTPase superfamily. EngA (Der) GTPase family. Associates with the 50S ribosomal subunit.

Functionally, GTPase that plays an essential role in the late steps of ribosome biogenesis. The sequence is that of GTPase Der from Thermoanaerobacter sp. (strain X514).